The primary structure comprises 66 residues: Large ribosomal subunit protein bL33c (66 aa).

It belongs to the bacterial ribosomal protein bL33 family.

It is found in the plastid. The protein localises to the chloroplast. The chain is Large ribosomal subunit protein bL33c from Liriodendron tulipifera (Tuliptree).